We begin with the raw amino-acid sequence, 630 residues long: ATP-dependent zinc metalloprotease FtsH (630 aa).

Residues 1–7 (MNNFMKN) lie on the Cytoplasmic side of the membrane. Residues 8 to 28 (IGFYLVLIALSILVAQFFVDT) traverse the membrane as a helical segment. Residues 29–111 (DVNTIVDTDV…KTEPEPTAPW (83 aa)) are Periplasmic-facing. A helical membrane pass occupies residues 112–132 (WTGMLAYILPIILLIGAWFFI). The Cytoplasmic portion of the chain corresponds to 133 to 630 (MQRMQGGGSQ…ENREHENNDK (498 aa)). 203–210 (GPPGTGKT) provides a ligand contact to ATP. Position 425 (His-425) interacts with Zn(2+). Residue Glu-426 is part of the active site. Zn(2+) is bound by residues His-429 and Asp-501. Residues 601-630 (KLIKGEPLDDDSIDNSTDENENREHENNDK) are disordered. Over residues 608–619 (LDDDSIDNSTDE) the composition is skewed to acidic residues. A compositionally biased stretch (basic and acidic residues) spans 620 to 630 (NENREHENNDK).

The protein in the central section; belongs to the AAA ATPase family. It in the C-terminal section; belongs to the peptidase M41 family. Homohexamer. Zn(2+) serves as cofactor.

The protein localises to the cell inner membrane. Functionally, acts as a processive, ATP-dependent zinc metallopeptidase for both cytoplasmic and membrane proteins. Plays a role in the quality control of integral membrane proteins. This Halothermothrix orenii (strain H 168 / OCM 544 / DSM 9562) protein is ATP-dependent zinc metalloprotease FtsH.